A 428-amino-acid chain; its full sequence is Divergent protein kinase domain 1A (428 aa).

At 1-27 (MARSLCAGAWLRKPHYLQARLSYMRVK) the chain is on the cytoplasmic side. Residues 28-48 (YLFFSWLVVFVGSWIIYVQYS) form a helical membrane-spanning segment. Residues 49–428 (TYTELCRGKD…WKKISYTNDS (380 aa)) are Lumenal-facing.

Belongs to the DIPK family. Among the many cysteines in the lumenal domain, most are probably involved in disulfide bonds. As to expression, ubiquitous.

Its subcellular location is the endoplasmic reticulum membrane. The sequence is that of Divergent protein kinase domain 1A (Dipk1a) from Mus musculus (Mouse).